The primary structure comprises 59 residues: Small ribosomal subunit protein bS21 (59 aa).

Belongs to the bacterial ribosomal protein bS21 family.

The protein is Small ribosomal subunit protein bS21 of Acholeplasma laidlawii (strain PG-8A).